A 120-amino-acid chain; its full sequence is Ribonuclease P protein component (120 aa).

Belongs to the RnpA family. In terms of assembly, consists of a catalytic RNA component (M1 or rnpB) and a protein subunit.

It catalyses the reaction Endonucleolytic cleavage of RNA, removing 5'-extranucleotides from tRNA precursor.. Functionally, RNaseP catalyzes the removal of the 5'-leader sequence from pre-tRNA to produce the mature 5'-terminus. It can also cleave other RNA substrates such as 4.5S RNA. The protein component plays an auxiliary but essential role in vivo by binding to the 5'-leader sequence and broadening the substrate specificity of the ribozyme. This chain is Ribonuclease P protein component, found in Bordetella avium (strain 197N).